The primary structure comprises 393 residues: SEC12-like protein 2 (393 aa).

An N-acetylalanine modification is found at alanine 2. Topologically, residues 2-367 are cytoplasmic; that stretch reads ANQSTETNQP…EQKGDKPGVR (366 aa). Residues 41-67 form a disordered region; sequence EKSEDDDESSSSSSSSRSCIVLSGGGG. A Phosphoserine modification is found at serine 43. 4 WD repeats span residues 151-190, 193-231, 283-322, and 326-367; these read RDVG…TLLN, QAHS…AVAS, IKKN…TIQV, and AHLG…PGVR. Residues 368–388 form a helical; Signal-anchor for type II membrane protein membrane-spanning segment; sequence WWLLVLLIVLLYVVAYYYMKA. Topologically, residues 389–393 are lumenal; sequence KGIIP.

In terms of assembly, interacts with BZIP28.

It is found in the endoplasmic reticulum membrane. The protein resides in the golgi apparatus. It localises to the cis-Golgi network membrane. In terms of biological role, required for the formation or budding of transport vesicles from the ER. This Arabidopsis thaliana (Mouse-ear cress) protein is SEC12-like protein 2 (STL2P).